Reading from the N-terminus, the 209-residue chain is Outer-membrane lipoprotein LolB (209 aa).

The signal sequence occupies residues 1 to 17 (MKKSTLLFSLMAMALSG). C18 carries N-palmitoyl cysteine lipidation. C18 carries S-diacylglycerol cysteine lipidation.

It belongs to the LolB family. As to quaternary structure, monomer.

The protein resides in the cell outer membrane. Plays a critical role in the incorporation of lipoproteins in the outer membrane after they are released by the LolA protein. The protein is Outer-membrane lipoprotein LolB of Haemophilus ducreyi (strain 35000HP / ATCC 700724).